The sequence spans 634 residues: 1-deoxy-D-xylulose-5-phosphate synthase (634 aa).

Thiamine diphosphate is bound by residues histidine 74 and 115–117 (AHS). Position 146 (aspartate 146) interacts with Mg(2+). Thiamine diphosphate-binding positions include 147-148 (GA), asparagine 176, tyrosine 283, and glutamate 365. Asparagine 176 serves as a coordination point for Mg(2+).

Belongs to the transketolase family. DXPS subfamily. As to quaternary structure, homodimer. Mg(2+) is required as a cofactor. It depends on thiamine diphosphate as a cofactor.

The enzyme catalyses D-glyceraldehyde 3-phosphate + pyruvate + H(+) = 1-deoxy-D-xylulose 5-phosphate + CO2. Its pathway is metabolic intermediate biosynthesis; 1-deoxy-D-xylulose 5-phosphate biosynthesis; 1-deoxy-D-xylulose 5-phosphate from D-glyceraldehyde 3-phosphate and pyruvate: step 1/1. Catalyzes the acyloin condensation reaction between C atoms 2 and 3 of pyruvate and glyceraldehyde 3-phosphate to yield 1-deoxy-D-xylulose-5-phosphate (DXP). The chain is 1-deoxy-D-xylulose-5-phosphate synthase from Burkholderia orbicola (strain MC0-3).